A 158-amino-acid chain; its full sequence is 2-C-methyl-D-erythritol 2,4-cyclodiphosphate synthase (158 aa).

The a divalent metal cation site is built by Asp9 and His11. Residues 9–11 (DVH) and 35–36 (HS) each bind 4-CDP-2-C-methyl-D-erythritol 2-phosphate. His43 is a binding site for a divalent metal cation. 4-CDP-2-C-methyl-D-erythritol 2-phosphate is bound by residues 57–59 (DIG), 62–66 (FPDTD), 101–107 (AQKPKMA), 133–136 (TTTE), Phe140, and Arg143.

Belongs to the IspF family. In terms of assembly, homotrimer. A divalent metal cation is required as a cofactor.

The catalysed reaction is 4-CDP-2-C-methyl-D-erythritol 2-phosphate = 2-C-methyl-D-erythritol 2,4-cyclic diphosphate + CMP. It functions in the pathway isoprenoid biosynthesis; isopentenyl diphosphate biosynthesis via DXP pathway; isopentenyl diphosphate from 1-deoxy-D-xylulose 5-phosphate: step 4/6. Its function is as follows. Involved in the biosynthesis of isopentenyl diphosphate (IPP) and dimethylallyl diphosphate (DMAPP), two major building blocks of isoprenoid compounds. Catalyzes the conversion of 4-diphosphocytidyl-2-C-methyl-D-erythritol 2-phosphate (CDP-ME2P) to 2-C-methyl-D-erythritol 2,4-cyclodiphosphate (ME-CPP) with a corresponding release of cytidine 5-monophosphate (CMP). This chain is 2-C-methyl-D-erythritol 2,4-cyclodiphosphate synthase, found in Bacillus pumilus (strain SAFR-032).